The primary structure comprises 229 residues: Transmembrane emp24 domain-containing protein 5 (229 aa).

The N-terminal stretch at 1–27 is a signal peptide; that stretch reads MGDKIWLPFPVLLLAALPPVLLPGAAG. The Lumenal segment spans residues 28–196; it reads FTPSLDSDFT…IQESNFDRVN (169 aa). Residues 45 to 126 form the GOLD domain; the sequence is RECFYQPMPL…EKVIFFELIL (82 aa). A helical transmembrane segment spans residues 197–217; the sequence is FWSMVNLVVMVVVSAIQVYML. Residues 218–229 are Cytoplasmic-facing; that stretch reads KSLFEDKRKSRT.

This sequence belongs to the EMP24/GP25L family. In terms of assembly, interacts with TMED9 and TMED10.

It localises to the endoplasmic reticulum membrane. It is found in the golgi apparatus. The protein resides in the cis-Golgi network membrane. Its subcellular location is the endoplasmic reticulum-Golgi intermediate compartment membrane. Functionally, potential role in vesicular protein trafficking, mainly in the early secretory pathway. Required for the maintenance of the Golgi apparatus; involved in protein exchange between Golgi stacks during assembly. Probably not required for COPI-vesicle-mediated retrograde transport. This is Transmembrane emp24 domain-containing protein 5 (TMED5) from Pongo abelii (Sumatran orangutan).